Here is a 362-residue protein sequence, read N- to C-terminus: Myricetin 3'/5'-O-methyltransferase 1 (362 aa).

Asp229 contacts S-adenosyl-L-methionine. The Proton acceptor role is filled by His267.

The protein belongs to the class I-like SAM-binding methyltransferase superfamily. Cation-independent O-methyltransferase family. As to quaternary structure, homodimer. In terms of tissue distribution, mainly expressed in leaves secreting glandular trichomes types 1 and 4 and, to a lesser extent, in storage trichomes type 6.

It catalyses the reaction myricetin + S-adenosyl-L-methionine = laricitrin + S-adenosyl-L-homocysteine + H(+). The enzyme catalyses laricitrin + S-adenosyl-L-methionine = syringetin + S-adenosyl-L-homocysteine + H(+). It carries out the reaction a 3'-hydroxyflavone + S-adenosyl-L-methionine = a 3'-methoxyflavone + S-adenosyl-L-homocysteine + H(+). The catalysed reaction is a 5'-hydroxy-3'-methoxyflavone + S-adenosyl-L-methionine = a 3',5'-dimethoxyflavone + S-adenosyl-L-homocysteine + H(+). It catalyses the reaction quercetin + S-adenosyl-L-methionine = isorhamnetin + S-adenosyl-L-homocysteine + H(+). The enzyme catalyses rhamnetin + S-adenosyl-L-methionine = rhamnacene + S-adenosyl-L-homocysteine + H(+). It carries out the reaction 3',4',5,7-tetrahydroxy-3-methoxyflavone + S-adenosyl-L-methionine = 3,3'-O-dimethylquercetin + S-adenosyl-L-homocysteine + H(+). It functions in the pathway flavonoid metabolism. Its function is as follows. Flavonoid 3'/5'-O-methyltransferase involved in the biosynthesis of polymethoxylated flavonoids natural products such as myricetin derivatives, aroma compounds possessing antioxidant properties and exhibiting pharmacological activities such as anti-carcinogen, anti-viral, anti-thrombotic, anti-diabetic, anti-atherosclerotic, and anti-inflammatory effects. Catalyzes S-adenosylmethionine-dependent regioselective 3'/5'-O-methylation of flavonoids; active on various hydroxylated flavonoid substrates, including myricetin and quercetin, but inactive toward kaempferol. Mediates the formation of 3'-methyl derivatives from quercetin, myricetin, 3-methyl quercetin and 7-methyl quercetin (rhamnetin), producing 3'-methyl quercetin (isorhamnetin), 3'-methyl myricetin (laricitrin), 3,3'-dimethyl quercetin (3-O-methylisorhamnetin) and 7,3'-dimethyl quercetin (7-O-methylisorhamnetin), respectively. Triggers the 5'-O-methylation of 3'-methyl myricetin (laricitrin), thus leading to production of 3',5'-dimethyl myricetin (syringetin). In Solanum habrochaites (Wild tomato), this protein is Myricetin 3'/5'-O-methyltransferase 1.